The chain runs to 390 residues: Formate-dependent phosphoribosylglycinamide formyltransferase (390 aa).

N(1)-(5-phospho-beta-D-ribosyl)glycinamide contacts are provided by residues 14–15 (EL) and Glu74. ATP-binding positions include Arg106, Lys147, 152 to 157 (SSGKGQ), 187 to 190 (EQFI), and Glu195. The region spanning 111 to 304 (DLAAQELGIT…EFDLHARAIM (194 aa)) is the ATP-grasp domain. Mg(2+) contacts are provided by Glu263 and Glu275. Residues Asp282, Lys351, and 358–359 (RR) contribute to the N(1)-(5-phospho-beta-D-ribosyl)glycinamide site.

The protein belongs to the PurK/PurT family. As to quaternary structure, homodimer.

It carries out the reaction N(1)-(5-phospho-beta-D-ribosyl)glycinamide + formate + ATP = N(2)-formyl-N(1)-(5-phospho-beta-D-ribosyl)glycinamide + ADP + phosphate + H(+). The protein operates within purine metabolism; IMP biosynthesis via de novo pathway; N(2)-formyl-N(1)-(5-phospho-D-ribosyl)glycinamide from N(1)-(5-phospho-D-ribosyl)glycinamide (formate route): step 1/1. Functionally, involved in the de novo purine biosynthesis. Catalyzes the transfer of formate to 5-phospho-ribosyl-glycinamide (GAR), producing 5-phospho-ribosyl-N-formylglycinamide (FGAR). Formate is provided by PurU via hydrolysis of 10-formyl-tetrahydrofolate. The protein is Formate-dependent phosphoribosylglycinamide formyltransferase of Erythrobacter litoralis (strain HTCC2594).